Consider the following 172-residue polypeptide: Stellate protein CG33236/CG33240/CG33244/CG33245 (172 aa).

The protein belongs to the casein kinase 2 subunit beta family. Interacts in vitro with the casein kinase 2 alpha subunit (CkII-alpha). The relevance of such interaction is however unclear in vivo. Probably not expressed in wild-type flies. In males lacking the Y chromosome, it is testis-specific and constitutes the main component of star-shaped crystals.

Functionally, unknown. In males lacking the Y chromosome, its strong overexpression leads to the appearance of proteinaceous star-shaped crystals in the primary spermatocytes causing meiotic drive, possibly by interfering with normal casein kinase 2 activity. This Drosophila melanogaster (Fruit fly) protein is Stellate protein CG33236/CG33240/CG33244/CG33245 (Ste:CG33236).